The primary structure comprises 426 residues: MIQQRVIRYIEKEHLFLPDDKLLVALSGGADSVALLRVLHTAGYQCEAAHCNFHLRGEESNRDERFVRQLCQKYGIRLHITDFNTTQYATEKRISIEMAARELRYNWFEKIKEECGAHVIAVAHHQDDSVETMLFNLIRGTGITGLLGIRPRNGAIVRPLLCINREEIIRYLQQIGQDFVTDSTNLEDEYTRNKIRLNLLPLMQEINPSVKNSLIETSNHLNDVATIYNKVIDEAKTRIITPEGIRIDALLDEPAPEAFLFETLHPLGFNSAQIKDIANSLHGQPGKQFVSKEWRVIKDRNLLLLETIRPEDESTLPYQLIKEEREFTPDFRIPREKETACFDADKLNEEIHCRKWQAGDTFIPFGMTGKKKISDYLTDRKFSISQKERQWVLCCGERIAWLIGERTDNRFRIDETTKRVIIYKIV.

An ATP-binding site is contributed by 27-32; that stretch reads SGGADS.

Belongs to the tRNA(Ile)-lysidine synthase family.

Its subcellular location is the cytoplasm. It catalyses the reaction cytidine(34) in tRNA(Ile2) + L-lysine + ATP = lysidine(34) in tRNA(Ile2) + AMP + diphosphate + H(+). Its function is as follows. Ligates lysine onto the cytidine present at position 34 of the AUA codon-specific tRNA(Ile) that contains the anticodon CAU, in an ATP-dependent manner. Cytidine is converted to lysidine, thus changing the amino acid specificity of the tRNA from methionine to isoleucine. The chain is tRNA(Ile)-lysidine synthase from Bacteroides thetaiotaomicron (strain ATCC 29148 / DSM 2079 / JCM 5827 / CCUG 10774 / NCTC 10582 / VPI-5482 / E50).